We begin with the raw amino-acid sequence, 291 residues long: ATP synthase gamma chain (291 aa).

It belongs to the ATPase gamma chain family. As to quaternary structure, F-type ATPases have 2 components, CF(1) - the catalytic core - and CF(0) - the membrane proton channel. CF(1) has five subunits: alpha(3), beta(3), gamma(1), delta(1), epsilon(1). CF(0) has three main subunits: a, b and c.

It is found in the cell inner membrane. Its function is as follows. Produces ATP from ADP in the presence of a proton gradient across the membrane. The gamma chain is believed to be important in regulating ATPase activity and the flow of protons through the CF(0) complex. In Verminephrobacter eiseniae (strain EF01-2), this protein is ATP synthase gamma chain.